We begin with the raw amino-acid sequence, 277 residues long: Large ribosomal subunit protein uL2 (277 aa).

Residues 222-277 (GSVMNPNDHPHGGGEGKAPVGRKAPSTPWGKPALGLKTRNKKAKSDKLIVRRRNQK) form a disordered region.

This sequence belongs to the universal ribosomal protein uL2 family. In terms of assembly, part of the 50S ribosomal subunit. Forms a bridge to the 30S subunit in the 70S ribosome.

Functionally, one of the primary rRNA binding proteins. Required for association of the 30S and 50S subunits to form the 70S ribosome, for tRNA binding and peptide bond formation. It has been suggested to have peptidyltransferase activity; this is somewhat controversial. Makes several contacts with the 16S rRNA in the 70S ribosome. The polypeptide is Large ribosomal subunit protein uL2 (Streptococcus agalactiae serotype Ia (strain ATCC 27591 / A909 / CDC SS700)).